The following is a 105-amino-acid chain: uncharacterized protein (105 aa).

2 helical membrane passes run 7–26 (VLSV…WLSL) and 30–52 (VDMT…LISI).

Its subcellular location is the cell membrane. This is an uncharacterized protein from Archaeoglobus fulgidus (strain ATCC 49558 / DSM 4304 / JCM 9628 / NBRC 100126 / VC-16).